The following is a 461-amino-acid chain: Ribosomal protein uS12 methylthiotransferase RimO (461 aa).

The region spanning 13–128 (PKVGFVSLGC…VMQHVHTHLP (116 aa)) is the MTTase N-terminal domain. Cysteine 22, cysteine 58, cysteine 87, cysteine 159, cysteine 163, and cysteine 166 together coordinate [4Fe-4S] cluster. The region spanning 145-390 (LTPRHYAYLK…MEVAEEVSAK (246 aa)) is the Radical SAM core domain. In terms of domain architecture, TRAM spans 393–461 (AKKVGKTLKV…ADGHDLWGEV (69 aa)).

Belongs to the methylthiotransferase family. RimO subfamily. [4Fe-4S] cluster serves as cofactor.

It is found in the cytoplasm. It carries out the reaction L-aspartate(89)-[ribosomal protein uS12]-hydrogen + (sulfur carrier)-SH + AH2 + 2 S-adenosyl-L-methionine = 3-methylsulfanyl-L-aspartate(89)-[ribosomal protein uS12]-hydrogen + (sulfur carrier)-H + 5'-deoxyadenosine + L-methionine + A + S-adenosyl-L-homocysteine + 2 H(+). Functionally, catalyzes the methylthiolation of an aspartic acid residue of ribosomal protein uS12. This Paraburkholderia phytofirmans (strain DSM 17436 / LMG 22146 / PsJN) (Burkholderia phytofirmans) protein is Ribosomal protein uS12 methylthiotransferase RimO.